The following is a 233-amino-acid chain: Large ribosomal subunit protein eL6z (233 aa).

The tract at residues glutamate 175–glutamine 195 is disordered.

It belongs to the eukaryotic ribosomal protein eL6 family.

This Arabidopsis thaliana (Mouse-ear cress) protein is Large ribosomal subunit protein eL6z (RPL6A).